The primary structure comprises 299 residues: Coenzyme PQQ synthesis protein B (299 aa).

The protein belongs to the PqqB family.

It functions in the pathway cofactor biosynthesis; pyrroloquinoline quinone biosynthesis. In terms of biological role, may be involved in the transport of PQQ or its precursor to the periplasm. This chain is Coenzyme PQQ synthesis protein B, found in Xanthomonas oryzae pv. oryzae (strain MAFF 311018).